The primary structure comprises 349 residues: Small ribosomal subunit protein uS2 (349 aa).

Belongs to the universal ribosomal protein uS2 family.

In Methylobacterium sp. (strain 4-46), this protein is Small ribosomal subunit protein uS2.